We begin with the raw amino-acid sequence, 422 residues long: 26S proteasome non-ATPase regulatory subunit 11 (422 aa).

Residues 224 to 392 (DWKTAYSYFY…GVLIIFDEPP (169 aa)) enclose the PCI domain.

Belongs to the proteasome subunit S9 family. As to quaternary structure, component of the 19S proteasome regulatory particle complex. The 26S proteasome consists of a 20S core particle (CP) and two 19S regulatory subunits (RP). The regulatory particle is made of a lid composed of 9 subunits including PSMD11, a base containing 6 ATPases and few additional components.

The protein resides in the nucleus. Its subcellular location is the cytoplasm. It localises to the cytosol. Functionally, component of the 26S proteasome, a multiprotein complex involved in the ATP-dependent degradation of ubiquitinated proteins. This complex plays a key role in the maintenance of protein homeostasis by removing misfolded or damaged proteins, which could impair cellular functions, and by removing proteins whose functions are no longer required. Therefore, the proteasome participates in numerous cellular processes, including cell cycle progression, apoptosis, or DNA damage repair. In the complex, PSMD11 is required for proteasome assembly. Plays a key role in increased proteasome activity in embryonic stem cells (ESCs): its high expression in ESCs promotes enhanced assembly of the 26S proteasome, followed by higher proteasome activity. This chain is 26S proteasome non-ATPase regulatory subunit 11 (psmd11), found in Xenopus tropicalis (Western clawed frog).